A 122-amino-acid polypeptide reads, in one-letter code: Large ribosomal subunit protein uL14 (122 aa).

This sequence belongs to the universal ribosomal protein uL14 family. In terms of assembly, part of the 50S ribosomal subunit. Forms a cluster with proteins L3 and L19. In the 70S ribosome, L14 and L19 interact and together make contacts with the 16S rRNA in bridges B5 and B8.

In terms of biological role, binds to 23S rRNA. Forms part of two intersubunit bridges in the 70S ribosome. The protein is Large ribosomal subunit protein uL14 of Beijerinckia indica subsp. indica (strain ATCC 9039 / DSM 1715 / NCIMB 8712).